The chain runs to 235 residues: Ubiquinone biosynthesis O-methyltransferase (235 aa).

S-adenosyl-L-methionine is bound by residues R36, G56, D77, and M122.

This sequence belongs to the methyltransferase superfamily. UbiG/COQ3 family.

The catalysed reaction is a 3-demethylubiquinol + S-adenosyl-L-methionine = a ubiquinol + S-adenosyl-L-homocysteine + H(+). It catalyses the reaction a 3-(all-trans-polyprenyl)benzene-1,2-diol + S-adenosyl-L-methionine = a 2-methoxy-6-(all-trans-polyprenyl)phenol + S-adenosyl-L-homocysteine + H(+). It functions in the pathway cofactor biosynthesis; ubiquinone biosynthesis. In terms of biological role, O-methyltransferase that catalyzes the 2 O-methylation steps in the ubiquinone biosynthetic pathway. The chain is Ubiquinone biosynthesis O-methyltransferase from Leptothrix cholodnii (strain ATCC 51168 / LMG 8142 / SP-6) (Leptothrix discophora (strain SP-6)).